The primary structure comprises 347 residues: Dihydroorotase (347 aa).

The Zn(2+) site is built by His-13 and His-15. Residues 15-17 and Asn-41 contribute to the substrate site; that span reads HLR. Residues Lys-99, His-136, and His-174 each contribute to the Zn(2+) site. Lys-99 bears the N6-carboxylysine mark. His-136 is a substrate binding site. Position 219 (Leu-219) interacts with substrate. Zn(2+) is bound at residue Asp-247. Asp-247 is a catalytic residue. Substrate is bound by residues His-251 and Ala-263.

It belongs to the metallo-dependent hydrolases superfamily. DHOase family. Class II DHOase subfamily. As to quaternary structure, homodimer. It depends on Zn(2+) as a cofactor.

It catalyses the reaction (S)-dihydroorotate + H2O = N-carbamoyl-L-aspartate + H(+). It functions in the pathway pyrimidine metabolism; UMP biosynthesis via de novo pathway; (S)-dihydroorotate from bicarbonate: step 3/3. In terms of biological role, catalyzes the reversible cyclization of carbamoyl aspartate to dihydroorotate. This is Dihydroorotase from Rhizobium meliloti (strain 1021) (Ensifer meliloti).